Here is a 2435-residue protein sequence, read N- to C-terminus: Highly reducing polyketide synthase ATR6 (2435 aa).

The region spanning 18–450 (AEPIAIVSAA…GSNAHVVLDN (433 aa)) is the Ketosynthase family 3 (KS3) domain. Active-site for beta-ketoacyl synthase activity residues include C192, H331, and H371. The interval 586–883 (FVFTGQGAQW…EIGPSAALGG (298 aa)) is malonyl-CoA:ACP transacylase (MAT) domain. The active-site For malonyltransferase activity is the S682. Positions 979–1125 (HDLLGGKVLG…GLVRLALNAS (147 aa)) are N-terminal hotdog fold. Residues 979 to 1291 (HDLLGGKVLG…LRGISMTSVG (313 aa)) form a dehydratase (DH) domain region. The 318-residue stretch at 979-1296 (HDLLGGKVLG…MTSVGLQGNV (318 aa)) folds into the PKS/mFAS DH domain. H1011 functions as the For beta-hydroxyacyl dehydratase activity in the catalytic mechanism. A C-terminal hotdog fold region spans residues 1141–1296 (QYPTPARFWY…MTSVGLQGNV (156 aa)). Residues 1724-2037 (GILDTLHFAE…DHNRLRNVVI (314 aa)) form an enoylreductase (ER) domain region. The tract at residues 2062–2301 (PEQTYLLVGK…ITGIAVPQPG (240 aa)) is catalytic ketoreductase (KRc) domain. Residues 2353 to 2429 (VLLSSAVGVL…VLCQKIISRM (77 aa)) enclose the Carrier domain. S2389 bears the O-(pantetheine 4'-phosphoryl)serine mark.

Its pathway is mycotoxin biosynthesis. Its function is as follows. Highly reducing polyketide synthase; part of the core atranone cluster (CAC) which products are predicted to catalyze most or all steps of mycotoxin atranone synthesis, starting from geranylgeranyl pyrophosphate (GGPP). The initial cyclization of GGPP to dolabellane is probably performed by the terpene cyclase ATR13. The Baeyer-Villiger oxidation near the end of the atranone synthesis, which converts atranones D and E to atranones F and G is predicted to be catalyzed by the monooxygenase ATR8. Of the CAC's other predicted gene products, the reducing PKS ATR6 might synthesize a polyketide chain. This polyketide is probably transferred onto the atranone backbone by the polyketide transferase ATR5. Other predicted CAC products include 4 oxygenases (ATR2, ATR3, ATR4, and ATR14), 3 short-chain reductases (ATR7, ATR9, and ATR10), and a methyltransferase (ATR12). These may all be involved in the various steps of atranone biosynthesis, although their specific roles must await experimental determination. This is Highly reducing polyketide synthase ATR6 from Stachybotrys chlorohalonatus (strain IBT 40285).